Reading from the N-terminus, the 86-residue chain is Kappa-theraphotoxin-Cg1c (86 aa).

The signal sequence occupies residues 1 to 21; the sequence is MKVSVLITLAVLGVMFVWASA. A propeptide spanning residues 22–50 is cleaved from the precursor; that stretch reads AELEERGSDHRDSPAWLKSMERIFQSEER. Disulfide bonds link cysteine 52–cysteine 66, cysteine 59–cysteine 71, and cysteine 65–cysteine 78.

This sequence belongs to the neurotoxin 10 (Hwtx-1) family. 28 (Jztx-11) subfamily. Expressed by the venom gland.

The protein resides in the secreted. In terms of biological role, probable ion channel inhibitor. The sequence is that of Kappa-theraphotoxin-Cg1c from Chilobrachys guangxiensis (Chinese earth tiger tarantula).